A 663-amino-acid chain; its full sequence is UvrABC system protein B (663 aa).

Positions 1-10 are enriched in basic and acidic residues; the sequence is MIDKRDDKPF. Residues 1-23 form a disordered region; the sequence is MIDKRDDKPFKLKSKYKPSGDQP. In terms of domain architecture, Helicase ATP-binding spans 31–418; sequence DNIEGGEKAQ…TNTIIEQIIR (388 aa). Residue 44-51 participates in ATP binding; sequence GATGTGKT. A Beta-hairpin motif is present at residues 97–120; it reads YYDYYQPEAYVPSSDTYIEKDSSV. In terms of domain architecture, Helicase C-terminal spans 435–597; it reads QMDDLLGEIN…IVPQTIKKDI (163 aa). The 36-residue stretch at 627 to 662 folds into the UVR domain; sequence KEAINALQKQMQEAAELLDFELAAQMRDLILELKLM.

Belongs to the UvrB family. In terms of assembly, forms a heterotetramer with UvrA during the search for lesions. Interacts with UvrC in an incision complex.

It is found in the cytoplasm. The UvrABC repair system catalyzes the recognition and processing of DNA lesions. A damage recognition complex composed of 2 UvrA and 2 UvrB subunits scans DNA for abnormalities. Upon binding of the UvrA(2)B(2) complex to a putative damaged site, the DNA wraps around one UvrB monomer. DNA wrap is dependent on ATP binding by UvrB and probably causes local melting of the DNA helix, facilitating insertion of UvrB beta-hairpin between the DNA strands. Then UvrB probes one DNA strand for the presence of a lesion. If a lesion is found the UvrA subunits dissociate and the UvrB-DNA preincision complex is formed. This complex is subsequently bound by UvrC and the second UvrB is released. If no lesion is found, the DNA wraps around the other UvrB subunit that will check the other stand for damage. This is UvrABC system protein B from Streptococcus pyogenes serotype M18 (strain MGAS8232).